Here is a 653-residue protein sequence, read N- to C-terminus: Protein SCARECROW (653 aa).

Disordered regions lie at residues 1–69 (MAES…RRVS) and 193–265 (PSSS…AVQT). Positions 17–31 (PLRTTSSGSSSSNNR) are enriched in low complexity. Positions 32–41 (GPPPPPPPPL) are enriched in pro residues. The span at 51 to 63 (EMSSNPDYNNSSR) shows a compositional bias: polar residues. A compositionally biased stretch (low complexity) spans 209-230 (QISNNPSPPQQQQQHQQQQQQH). A compositionally biased stretch (polar residues) spans 246–265 (STDAPPQPETVTATVPAVQT). In terms of domain architecture, GRAS spans 281-650 (QKQDEEGLHL…LSLLTASAWT (370 aa)). The interval 288–351 (LHLLTLLLQC…LLNSCLGIYA (64 aa)) is leucine repeat I (LRI). Residues 295 to 299 (LQCAE) carry the LxCxE motif motif. The VHIID stretch occupies residues 370–435 (FQVFNGISPL…GGPPHVRLTG (66 aa)). A VHIID motif is present at residues 401-405 (VHIID). Positions 445–477 (ATGKRLSDFADKLGLPFEFCPLAEKVGNLDTER) are leucine repeat II (LRII). The segment at 486–573 (VAVHWLQHSL…QQLLSKEIRN (88 aa)) is PFYRE. Residues 576-650 (AVGGPSRSGE…LSLLTASAWT (75 aa)) form an SAW region.

The protein belongs to the GRAS family. In terms of assembly, interacts with SHR, JKD and MGP. Interacts with SIEL. Interacts with RBR1 through its the LxCxE motif. Expressed in siliques, leaves and roots. Detected in the initial daughter cell before its asymmetric division and remains expressed only in the endodermal cell layer after the division. Expressed in the endodermis or starch sheath of the seedling hypocotyl, in the leaf bundle sheath cells and the root quiescent center.

It is found in the nucleus. Its function is as follows. Transcription factor required for quiescent center cells specification and maintenance of surrounding stem cells, and for the asymmetric cell division involved in radial pattern formation in roots. Essential for cell division but not differentiation of the ground tissue. Also required for normal shoot gravitropism. Regulates the radial organization of the shoot axial organs. Binds to the promoter of MGP, NUC, RLK and SCL3. Restricts SHR movment and sequesters it into the nucleus of the endodermis. The polypeptide is Protein SCARECROW (Arabidopsis thaliana (Mouse-ear cress)).